We begin with the raw amino-acid sequence, 101 residues long: Cilia- and flagella-associated protein 141 (101 aa).

In terms of assembly, microtubule inner protein component of sperm flagellar doublet microtubules. In terms of tissue distribution, expressed in airway epithelial cells.

Its subcellular location is the cytoplasm. The protein localises to the cytoskeleton. It is found in the cilium axoneme. The protein resides in the flagellum axoneme. Its function is as follows. Microtubule inner protein (MIP) part of the dynein-decorated doublet microtubules (DMTs) in cilia axoneme, which is required for motile cilia beating. In Homo sapiens (Human), this protein is Cilia- and flagella-associated protein 141.